The sequence spans 1288 residues: 5-oxoprolinase (1288 aa).

Position 151 is a phosphothreonine (Thr151). The disordered stretch occupies residues 1249 to 1269 (GGGGYGDPEDPAPLPGSPLQP). Position 1265 is a phosphoserine (Ser1265).

The protein belongs to the oxoprolinase family. As to quaternary structure, homodimer. As to expression, expressed in coronary artery and kidney.

The protein resides in the cytoplasm. Its subcellular location is the cytosol. The catalysed reaction is 5-oxo-L-proline + ATP + 2 H2O = L-glutamate + ADP + phosphate + H(+). In terms of biological role, catalyzes the cleavage of 5-oxo-L-proline to form L-glutamate coupled to the hydrolysis of ATP to ADP and inorganic phosphate. This is 5-oxoprolinase (OPLAH) from Bos taurus (Bovine).